The primary structure comprises 423 residues: Phosphoribosylamine--glycine ligase (423 aa).

Residues 107–314 (KAFMAKYNIP…LSDLVEAAID (208 aa)) enclose the ATP-grasp domain. 133–194 (VNQKGAPIVI…EDFLQGEEAS (62 aa)) is an ATP binding site. Mg(2+) contacts are provided by E284 and N286.

This sequence belongs to the GARS family. Requires Mg(2+) as cofactor. The cofactor is Mn(2+).

It catalyses the reaction 5-phospho-beta-D-ribosylamine + glycine + ATP = N(1)-(5-phospho-beta-D-ribosyl)glycinamide + ADP + phosphate + H(+). It participates in purine metabolism; IMP biosynthesis via de novo pathway; N(1)-(5-phospho-D-ribosyl)glycinamide from 5-phospho-alpha-D-ribose 1-diphosphate: step 2/2. In Neisseria meningitidis serogroup A / serotype 4A (strain DSM 15465 / Z2491), this protein is Phosphoribosylamine--glycine ligase.